The primary structure comprises 142 residues: Large ribosomal subunit protein uL13 (142 aa).

The protein belongs to the universal ribosomal protein uL13 family. In terms of assembly, part of the 50S ribosomal subunit.

Functionally, this protein is one of the early assembly proteins of the 50S ribosomal subunit, although it is not seen to bind rRNA by itself. It is important during the early stages of 50S assembly. The chain is Large ribosomal subunit protein uL13 from Francisella philomiragia subsp. philomiragia (strain ATCC 25017 / CCUG 19701 / FSC 153 / O#319-036).